The following is a 459-amino-acid chain: tRNA modification GTPase MnmE (459 aa).

The (6S)-5-formyl-5,6,7,8-tetrahydrofolate site is built by arginine 20, glutamate 85, and arginine 124. The region spanning 221-380 is the TrmE-type G domain; the sequence is GISTVIIGRP…LEEAIQSLFF (160 aa). Asparagine 231 contacts K(+). GTP-binding positions include 231–236, 250–256, and 275–278; these read NVGKSS, TDIPGTT, and DTAG. A Mg(2+)-binding site is contributed by serine 235. Threonine 250, isoleucine 252, and threonine 255 together coordinate K(+). Residue threonine 256 coordinates Mg(2+). Lysine 459 provides a ligand contact to (6S)-5-formyl-5,6,7,8-tetrahydrofolate.

It belongs to the TRAFAC class TrmE-Era-EngA-EngB-Septin-like GTPase superfamily. TrmE GTPase family. Homodimer. Heterotetramer of two MnmE and two MnmG subunits. It depends on K(+) as a cofactor.

Its subcellular location is the cytoplasm. Its function is as follows. Exhibits a very high intrinsic GTPase hydrolysis rate. Involved in the addition of a carboxymethylaminomethyl (cmnm) group at the wobble position (U34) of certain tRNAs, forming tRNA-cmnm(5)s(2)U34. The polypeptide is tRNA modification GTPase MnmE (Bacillus licheniformis (strain ATCC 14580 / DSM 13 / JCM 2505 / CCUG 7422 / NBRC 12200 / NCIMB 9375 / NCTC 10341 / NRRL NRS-1264 / Gibson 46)).